A 1306-amino-acid chain; its full sequence is Kinesin-like protein KIN-14L (1306 aa).

Positions 142–456 (NVKVFCRSRP…LSFSARAKNA (315 aa)) constitute a Kinesin motor domain. 223-230 (GQSRSGKT) contributes to the ATP binding site. Coiled coils occupy residues 466-507 (IKKW…ANDQ) and 540-595 (HRIE…ALNS). 2 stretches are compositionally biased toward polar residues: residues 592 to 611 (ALNS…SVIS) and 660 to 677 (LGSS…TNAQ). Disordered regions lie at residues 592 to 627 (ALNS…SVTK), 657 to 710 (KSGL…SGAI), and 849 to 881 (KSHT…RTSL). Low complexity predominate over residues 855 to 867 (SRSSSRGSSPGRS).

It belongs to the TRAFAC class myosin-kinesin ATPase superfamily. Kinesin family. KIN-14 subfamily.

This Oryza sativa subsp. japonica (Rice) protein is Kinesin-like protein KIN-14L.